Reading from the N-terminus, the 208-residue chain is Hemocyanin, units E and F (208 aa).

A Cu cation-binding site is contributed by His1. Residues His1–Leu74 are unit E. Residues Cys7 and Cys18 are joined by a disulfide bond. Residues Cys19–His21 constitute a cross-link (2'-(S-cysteinyl)-histidine (Cys-His)). A glycan (N-linked (GlcNAc...) asparagine) is linked at Asn43. Residues Val75–Thr208 form a unit F region. His113 provides a ligand contact to Cu cation. The cysteines at positions 119 and 130 are disulfide-linked. The segment at residues Cys131–His133 is a cross-link (2'-(S-cysteinyl)-histidine (Cys-His)). Positions 133 and 142 each coordinate Cu cation.

This sequence belongs to the tyrosinase family. Hemocyanin subfamily. As to quaternary structure, decamers of large identical subunits (390 kDa), each containing 8 globular oxygen-binding functional units. Cu(2+) is required as a cofactor.

Hemocyanins are copper-containing oxygen carriers occurring freely dissolved in the hemolymph of many mollusks and arthropods. The protein is Hemocyanin, units E and F of Sepia officinalis (Common cuttlefish).